The sequence spans 165 residues: Ribosome maturation factor RimM (165 aa).

The PRC barrel domain occupies 92–163 (EARHYWADLE…RVVVDPPEGL (72 aa)).

It belongs to the RimM family. In terms of assembly, binds ribosomal protein uS19.

The protein resides in the cytoplasm. Its function is as follows. An accessory protein needed during the final step in the assembly of 30S ribosomal subunit, possibly for assembly of the head region. Essential for efficient processing of 16S rRNA. May be needed both before and after RbfA during the maturation of 16S rRNA. It has affinity for free ribosomal 30S subunits but not for 70S ribosomes. In Anaeromyxobacter sp. (strain Fw109-5), this protein is Ribosome maturation factor RimM.